The following is a 187-amino-acid chain: Ribosome-recycling factor (187 aa).

This sequence belongs to the RRF family.

Its subcellular location is the cytoplasm. In terms of biological role, responsible for the release of ribosomes from messenger RNA at the termination of protein biosynthesis. May increase the efficiency of translation by recycling ribosomes from one round of translation to another. The polypeptide is Ribosome-recycling factor (Methylobacterium sp. (strain 4-46)).